A 130-amino-acid chain; its full sequence is Glycine cleavage system H protein (130 aa).

Positions 24 to 106 constitute a Lipoyl-binding domain; sequence TATVGITDFA…YGDGWMFKVK (83 aa). Lysine 65 carries the N6-lipoyllysine modification.

It belongs to the GcvH family. In terms of assembly, the glycine cleavage system is composed of four proteins: P, T, L and H. (R)-lipoate serves as cofactor.

The glycine cleavage system catalyzes the degradation of glycine. The H protein shuttles the methylamine group of glycine from the P protein to the T protein. This is Glycine cleavage system H protein from Marinobacter nauticus (strain ATCC 700491 / DSM 11845 / VT8) (Marinobacter aquaeolei).